A 314-amino-acid polypeptide reads, in one-letter code: 4-hydroxy-3-methylbut-2-enyl diphosphate reductase (314 aa).

Cys12 serves as a coordination point for [4Fe-4S] cluster. (2E)-4-hydroxy-3-methylbut-2-enyl diphosphate is bound by residues His41 and His74. The dimethylallyl diphosphate site is built by His41 and His74. Isopentenyl diphosphate contacts are provided by His41 and His74. Residue Cys96 participates in [4Fe-4S] cluster binding. (2E)-4-hydroxy-3-methylbut-2-enyl diphosphate is bound at residue His124. A dimethylallyl diphosphate-binding site is contributed by His124. His124 serves as a coordination point for isopentenyl diphosphate. The active-site Proton donor is Glu126. Thr167 provides a ligand contact to (2E)-4-hydroxy-3-methylbut-2-enyl diphosphate. Cys197 provides a ligand contact to [4Fe-4S] cluster. Ser225, Ser226, Asn227, and Ser269 together coordinate (2E)-4-hydroxy-3-methylbut-2-enyl diphosphate. Residues Ser225, Ser226, Asn227, and Ser269 each contribute to the dimethylallyl diphosphate site. Ser225, Ser226, Asn227, and Ser269 together coordinate isopentenyl diphosphate.

It belongs to the IspH family. [4Fe-4S] cluster serves as cofactor.

It catalyses the reaction isopentenyl diphosphate + 2 oxidized [2Fe-2S]-[ferredoxin] + H2O = (2E)-4-hydroxy-3-methylbut-2-enyl diphosphate + 2 reduced [2Fe-2S]-[ferredoxin] + 2 H(+). It carries out the reaction dimethylallyl diphosphate + 2 oxidized [2Fe-2S]-[ferredoxin] + H2O = (2E)-4-hydroxy-3-methylbut-2-enyl diphosphate + 2 reduced [2Fe-2S]-[ferredoxin] + 2 H(+). Its pathway is isoprenoid biosynthesis; dimethylallyl diphosphate biosynthesis; dimethylallyl diphosphate from (2E)-4-hydroxy-3-methylbutenyl diphosphate: step 1/1. It participates in isoprenoid biosynthesis; isopentenyl diphosphate biosynthesis via DXP pathway; isopentenyl diphosphate from 1-deoxy-D-xylulose 5-phosphate: step 6/6. Functionally, catalyzes the conversion of 1-hydroxy-2-methyl-2-(E)-butenyl 4-diphosphate (HMBPP) into a mixture of isopentenyl diphosphate (IPP) and dimethylallyl diphosphate (DMAPP). Acts in the terminal step of the DOXP/MEP pathway for isoprenoid precursor biosynthesis. The polypeptide is 4-hydroxy-3-methylbut-2-enyl diphosphate reductase (Actinobacillus succinogenes (strain ATCC 55618 / DSM 22257 / CCUG 43843 / 130Z)).